A 316-amino-acid chain; its full sequence is ATP synthase gamma chain (316 aa).

It belongs to the ATPase gamma chain family. As to quaternary structure, F-type ATPases have 2 components, CF(1) - the catalytic core - and CF(0) - the membrane proton channel. CF(1) has five subunits: alpha(3), beta(3), gamma(1), delta(1), epsilon(1). CF(0) has three main subunits: a, b and c.

The protein localises to the cellular thylakoid membrane. Produces ATP from ADP in the presence of a proton gradient across the membrane. The gamma chain is believed to be important in regulating ATPase activity and the flow of protons through the CF(0) complex. This is ATP synthase gamma chain from Prochlorococcus marinus (strain MIT 9211).